Here is a 331-residue protein sequence, read N- to C-terminus: Probable allantoicase (331 aa).

This sequence belongs to the allantoicase family.

It carries out the reaction allantoate + H2O = (S)-ureidoglycolate + urea. Its pathway is nitrogen metabolism; (S)-allantoin degradation; (S)-ureidoglycolate from allantoate (aminidohydrolase route): step 1/1. The polypeptide is Probable allantoicase (Pseudomonas fluorescens (strain SBW25)).